The primary structure comprises 338 residues: Ketol-acid reductoisomerase (NADP(+)) (338 aa).

Residues 1–181 (MKVYYDKDAD…GGTKGGVIET (181 aa)) form the KARI N-terminal Rossmann domain. Residues 24–27 (YGSQ), Arg-47, and Ser-52 each bind NADP(+). Residue His-107 is part of the active site. Position 133 (Gly-133) interacts with NADP(+). In terms of domain architecture, KARI C-terminal knotted spans 182 to 327 (NFREETETDL…SQLRAMMPWI (146 aa)). The Mg(2+) site is built by Asp-190, Glu-194, Glu-226, and Glu-230. Residue Ser-251 participates in substrate binding.

It belongs to the ketol-acid reductoisomerase family. It depends on Mg(2+) as a cofactor.

It catalyses the reaction (2R)-2,3-dihydroxy-3-methylbutanoate + NADP(+) = (2S)-2-acetolactate + NADPH + H(+). The enzyme catalyses (2R,3R)-2,3-dihydroxy-3-methylpentanoate + NADP(+) = (S)-2-ethyl-2-hydroxy-3-oxobutanoate + NADPH + H(+). Its pathway is amino-acid biosynthesis; L-isoleucine biosynthesis; L-isoleucine from 2-oxobutanoate: step 2/4. It functions in the pathway amino-acid biosynthesis; L-valine biosynthesis; L-valine from pyruvate: step 2/4. Its function is as follows. Involved in the biosynthesis of branched-chain amino acids (BCAA). Catalyzes an alkyl-migration followed by a ketol-acid reduction of (S)-2-acetolactate (S2AL) to yield (R)-2,3-dihydroxy-isovalerate. In the isomerase reaction, S2AL is rearranged via a Mg-dependent methyl migration to produce 3-hydroxy-3-methyl-2-ketobutyrate (HMKB). In the reductase reaction, this 2-ketoacid undergoes a metal-dependent reduction by NADPH to yield (R)-2,3-dihydroxy-isovalerate. This Methylobacillus flagellatus (strain ATCC 51484 / DSM 6875 / VKM B-1610 / KT) protein is Ketol-acid reductoisomerase (NADP(+)).